The primary structure comprises 20 residues: Cytochrome P450IIB (20 aa).

The protein belongs to the cytochrome P450 family. Heme is required as a cofactor.

Its subcellular location is the endoplasmic reticulum membrane. The protein resides in the microsome membrane. The enzyme catalyses an organic molecule + reduced [NADPH--hemoprotein reductase] + O2 = an alcohol + oxidized [NADPH--hemoprotein reductase] + H2O + H(+). Functionally, cytochromes P450 are a group of heme-thiolate monooxygenases. In liver microsomes, this enzyme is involved in an NADPH-dependent electron transport pathway. This isozyme is active upon P.nitroanisole, aniline, D-benzphetamine, delta(9)-tetrahydrocannabinol (THC) and strychnine. The sequence is that of Cytochrome P450IIB from Cavia porcellus (Guinea pig).